The chain runs to 130 residues: Small ribosomal subunit protein uS11 (130 aa).

Belongs to the universal ribosomal protein uS11 family. As to quaternary structure, part of the 30S ribosomal subunit. Interacts with proteins S7 and S18. Binds to IF-3.

Functionally, located on the platform of the 30S subunit, it bridges several disparate RNA helices of the 16S rRNA. Forms part of the Shine-Dalgarno cleft in the 70S ribosome. In Helicobacter hepaticus (strain ATCC 51449 / 3B1), this protein is Small ribosomal subunit protein uS11.